Reading from the N-terminus, the 129-residue chain is Small ribosomal subunit protein uS9 (129 aa).

This sequence belongs to the universal ribosomal protein uS9 family.

This chain is Small ribosomal subunit protein uS9, found in Nitratiruptor sp. (strain SB155-2).